We begin with the raw amino-acid sequence, 173 residues long: 2-C-methyl-D-erythritol 2,4-cyclodiphosphate synthase (173 aa).

Residues Asp-17 and His-19 each contribute to the a divalent metal cation site. 4-CDP-2-C-methyl-D-erythritol 2-phosphate contacts are provided by residues Asp-17 to His-19 and His-49 to Ser-50. Residue His-57 coordinates a divalent metal cation. 4-CDP-2-C-methyl-D-erythritol 2-phosphate-binding positions include Phe-76–Asp-80, Thr-147–Glu-150, Phe-154, and Arg-157.

This sequence belongs to the IspF family. In terms of assembly, homotrimer. The cofactor is a divalent metal cation.

The catalysed reaction is 4-CDP-2-C-methyl-D-erythritol 2-phosphate = 2-C-methyl-D-erythritol 2,4-cyclic diphosphate + CMP. It functions in the pathway isoprenoid biosynthesis; isopentenyl diphosphate biosynthesis via DXP pathway; isopentenyl diphosphate from 1-deoxy-D-xylulose 5-phosphate: step 4/6. In terms of biological role, involved in the biosynthesis of isopentenyl diphosphate (IPP) and dimethylallyl diphosphate (DMAPP), two major building blocks of isoprenoid compounds. Catalyzes the conversion of 4-diphosphocytidyl-2-C-methyl-D-erythritol 2-phosphate (CDP-ME2P) to 2-C-methyl-D-erythritol 2,4-cyclodiphosphate (ME-CPP) with a corresponding release of cytidine 5-monophosphate (CMP). This chain is 2-C-methyl-D-erythritol 2,4-cyclodiphosphate synthase, found in Ehrlichia canis (strain Jake).